We begin with the raw amino-acid sequence, 298 residues long: N-acetylmuramic acid 6-phosphate etherase (298 aa).

The SIS domain occupies 55-218 (IHTQVSGGGR…STGLMIKSGK (164 aa)). Catalysis depends on Glu-83, which acts as the Proton donor. Glu-114 is an active-site residue.

This sequence belongs to the GCKR-like family. MurNAc-6-P etherase subfamily. As to quaternary structure, homodimer.

The catalysed reaction is N-acetyl-D-muramate 6-phosphate + H2O = N-acetyl-D-glucosamine 6-phosphate + (R)-lactate. The protein operates within amino-sugar metabolism; 1,6-anhydro-N-acetylmuramate degradation. Its pathway is amino-sugar metabolism; N-acetylmuramate degradation. It participates in cell wall biogenesis; peptidoglycan recycling. Functionally, specifically catalyzes the cleavage of the D-lactyl ether substituent of MurNAc 6-phosphate, producing GlcNAc 6-phosphate and D-lactate. Together with AnmK, is also required for the utilization of anhydro-N-acetylmuramic acid (anhMurNAc) either imported from the medium or derived from its own cell wall murein, and thus plays a role in cell wall recycling. This Escherichia coli O1:K1 / APEC protein is N-acetylmuramic acid 6-phosphate etherase.